We begin with the raw amino-acid sequence, 477 residues long: MAGKTLYDKLWEAHEVKRRDDGSSLIYIDRHIIHEVTSPQAFEGLRLANRKPWRIDANIATPDHNVPTTPERKGGIEAIVDQVSRLQVQTLDENCDEYGIVEFKMNDERQGIVHVISPEQGATLPGMTVVCGDSHTSTHGAFGALAHGIGTSEVEHVLATQCLVAKKMKNMLVRVEGQLPAGVTAKDIVLAVIGKIGTAGGNGHAMEFAGSAIRELSMEGRMTICNMSIEAGARVGLVATDATTVAYVEGRPYAPKGEQWKQAVESWKDLVSDDDAVFDTVVELDASQIKPQVSWGTSPEMVLAVDQRVPDPAAETDLVKRGSIERALKYMGLTANQAITDIKLDRVFIGSCTNSRIEDLRAAAEIAKGRKVAASVKQAIVVPGSGLVKAQAEREGLDKIFLEAGFEWREPGCSMCLAMNPDRLESGEHCASTSNRNFEGRQGAGGRTHLVSPAMAAAAAVAGHFIDVRELIQGSAA.

[4Fe-4S] cluster-binding residues include C352, C413, and C416.

This sequence belongs to the aconitase/IPM isomerase family. LeuC type 1 subfamily. In terms of assembly, heterodimer of LeuC and LeuD. It depends on [4Fe-4S] cluster as a cofactor.

It catalyses the reaction (2R,3S)-3-isopropylmalate = (2S)-2-isopropylmalate. Its pathway is amino-acid biosynthesis; L-leucine biosynthesis; L-leucine from 3-methyl-2-oxobutanoate: step 2/4. Catalyzes the isomerization between 2-isopropylmalate and 3-isopropylmalate, via the formation of 2-isopropylmaleate. The sequence is that of 3-isopropylmalate dehydratase large subunit from Pseudomonas putida (strain ATCC 47054 / DSM 6125 / CFBP 8728 / NCIMB 11950 / KT2440).